A 290-amino-acid polypeptide reads, in one-letter code: ATP synthase gamma chain (290 aa).

It belongs to the ATPase gamma chain family. As to quaternary structure, F-type ATPases have 2 components, CF(1) - the catalytic core - and CF(0) - the membrane proton channel. CF(1) has five subunits: alpha(3), beta(3), gamma(1), delta(1), epsilon(1). CF(0) has three main subunits: a, b and c.

It is found in the cell inner membrane. Functionally, produces ATP from ADP in the presence of a proton gradient across the membrane. The gamma chain is believed to be important in regulating ATPase activity and the flow of protons through the CF(0) complex. This Anaeromyxobacter dehalogenans (strain 2CP-1 / ATCC BAA-258) protein is ATP synthase gamma chain.